A 305-amino-acid polypeptide reads, in one-letter code: Major pollen allergen Pha a 5.2 (305 aa).

The signal sequence occupies residues 1–25 (MAVQKYTVALFLAVALVAGPAALYA). Over residues 65 to 85 (GLNEEKNAARQTDDEQKRSDE) the composition is skewed to basic and acidic residues. Disordered stretches follow at residues 65–87 (GLNE…DEIN) and 279–299 (STAT…PAAV).

This sequence belongs to the Poa p IX/Phl p VI allergen family.

This is Major pollen allergen Pha a 5.2 from Phalaris aquatica (Canary grass).